Here is a 197-residue protein sequence, read N- to C-terminus: GTP cyclohydrolase-2 (197 aa).

Arg50–Glu54 is a binding site for GTP. Zn(2+) contacts are provided by Cys55, Cys66, and Cys68. Residues Gln71, Glu93–Arg95, and Thr115 contribute to the GTP site. The active-site Proton acceptor is the Asp127. The active-site Nucleophile is the Arg129. Residues Thr150 and Lys155 each contribute to the GTP site.

This sequence belongs to the GTP cyclohydrolase II family. It depends on Zn(2+) as a cofactor.

The enzyme catalyses GTP + 4 H2O = 2,5-diamino-6-hydroxy-4-(5-phosphoribosylamino)-pyrimidine + formate + 2 phosphate + 3 H(+). It functions in the pathway cofactor biosynthesis; riboflavin biosynthesis; 5-amino-6-(D-ribitylamino)uracil from GTP: step 1/4. Its function is as follows. Catalyzes the conversion of GTP to 2,5-diamino-6-ribosylamino-4(3H)-pyrimidinone 5'-phosphate (DARP), formate and pyrophosphate. The polypeptide is GTP cyclohydrolase-2 (Neisseria meningitidis serogroup C (strain 053442)).